The chain runs to 91 residues: MAVKIRLKRMGANKSPFYRVVVADSRAPRDGRFIEQIGYYNPVAKPEAEVKLNEELALKWLAEGAKPSDTVRNLFSKAGIMEKFHNAKLAK.

This sequence belongs to the bacterial ribosomal protein bS16 family.

This chain is Small ribosomal subunit protein bS16, found in Exiguobacterium sibiricum (strain DSM 17290 / CCUG 55495 / CIP 109462 / JCM 13490 / 255-15).